Here is a 204-residue protein sequence, read N- to C-terminus: Small ribosomal subunit protein uS4 (204 aa).

The interval 1-49 is disordered; that stretch reads MSKRKSAKYKLDRRMGENIWGRPNSPVNKRSYGPGQHGQRRKGKTSDFG. One can recognise an S4 RNA-binding domain in the interval 94-154; it reads QRLDMVVYRA…NKAKEMALVI (61 aa).

Belongs to the universal ribosomal protein uS4 family. As to quaternary structure, part of the 30S ribosomal subunit. Contacts protein S5. The interaction surface between S4 and S5 is involved in control of translational fidelity.

Its function is as follows. One of the primary rRNA binding proteins, it binds directly to 16S rRNA where it nucleates assembly of the body of the 30S subunit. Functionally, with S5 and S12 plays an important role in translational accuracy. The sequence is that of Small ribosomal subunit protein uS4 from Erythrobacter litoralis (strain HTCC2594).